The primary structure comprises 282 residues: MARKKLKKRKLLISLFFLVSIPLALFVLATTLSKPIEISKETEEIDEQQVFIDSLSGHAQILYEKYHVLPSITIAQAILESDWGNSELAAKANNLFGVKGNYKGHHVTMETDEVEKGKRKTIRAKFRKYSTFFESMDDHAQLFVRGTSWNKKKYKPVLEAGNYKEAATALQTSGYATDPDYADKISAIVEKYDLDEYDEVNPSLKSVDLNASIKDSAVQDVWSKPSTDDRSIRLTSAQSYVGKDIKVVSKKQKGQSVWYQFQINDKLIGWIDDSAVEIKEAT.

Positions 1 to 29 (MARKKLKKRKLLISLFFLVSIPLALFVLA) are cleaved as a signal peptide. The region spanning 203 to 281 (SLKSVDLNAS…DDSAVEIKEA (79 aa)) is the GW domain.

It belongs to the glycosyl hydrolase 73 family. Requires Mg(2+) as cofactor.

Its subcellular location is the secreted. The protein localises to the cell wall. Inhibited by EDTA. Functionally, is the major glucosaminidase responsible for peptidoglycan structural determination during vegetative growth. Catalyzes the hydrolysis of 1,4-beta-linkages between N-acetyl-D-glucosamine and N-acetylmuramic acid residues in peptidoglycan. Acts processively from the ends of the glycan strands. Also plays a role in motility, chemotaxis and cell division. The sequence is that of Exo-glucosaminidase LytG (lytG) from Bacillus subtilis (strain 168).